Reading from the N-terminus, the 436-residue chain is Putative permease MJ0326 (436 aa).

Transmembrane regions (helical) follow at residues 24–44 (LAGI…PQIL), 51–71 (FGAV…VMGL), 79–99 (LAPG…GMGI), 103–123 (VALG…LTKI), 139–159 (TAVG…GIIV), 171–191 (LMEP…ILVS), 194–214 (VIGA…ILGI), 235–255 (LDIM…FFFV), 322–342 (GFVS…YPVV), 345–365 (IPPY…MRSV), 381–401 (ITLL…LGFI), and 416–436 (VHWL…YLSG).

It belongs to the nucleobase:cation symporter-2 (NCS2) (TC 2.A.40) family. Azg-like subfamily.

Its subcellular location is the cell membrane. In Methanocaldococcus jannaschii (strain ATCC 43067 / DSM 2661 / JAL-1 / JCM 10045 / NBRC 100440) (Methanococcus jannaschii), this protein is Putative permease MJ0326.